Reading from the N-terminus, the 469-residue chain is 3-isopropylmalate dehydratase large subunit (469 aa).

[4Fe-4S] cluster-binding residues include C350, C410, and C413.

The protein belongs to the aconitase/IPM isomerase family. LeuC type 1 subfamily. Heterodimer of LeuC and LeuD. It depends on [4Fe-4S] cluster as a cofactor.

It catalyses the reaction (2R,3S)-3-isopropylmalate = (2S)-2-isopropylmalate. The protein operates within amino-acid biosynthesis; L-leucine biosynthesis; L-leucine from 3-methyl-2-oxobutanoate: step 2/4. Its function is as follows. Catalyzes the isomerization between 2-isopropylmalate and 3-isopropylmalate, via the formation of 2-isopropylmaleate. The polypeptide is 3-isopropylmalate dehydratase large subunit (Agrobacterium fabrum (strain C58 / ATCC 33970) (Agrobacterium tumefaciens (strain C58))).